Reading from the N-terminus, the 101-residue chain is Small ribosomal subunit protein uS14 (101 aa).

Residues 1-20 (MAKISAVERNKKRERLTKRD) form a disordered region.

This sequence belongs to the universal ribosomal protein uS14 family. In terms of assembly, part of the 30S ribosomal subunit. Contacts proteins S3 and S10.

In terms of biological role, binds 16S rRNA, required for the assembly of 30S particles and may also be responsible for determining the conformation of the 16S rRNA at the A site. The polypeptide is Small ribosomal subunit protein uS14 (Rhodospirillum rubrum (strain ATCC 11170 / ATH 1.1.1 / DSM 467 / LMG 4362 / NCIMB 8255 / S1)).